A 236-amino-acid chain; its full sequence is Small ribosomal subunit protein uS2c (236 aa).

It belongs to the universal ribosomal protein uS2 family.

It localises to the plastid. Its subcellular location is the chloroplast. The chain is Small ribosomal subunit protein uS2c (rps2) from Aethionema grandiflorum (Persian stone-cress).